Consider the following 375-residue polypeptide: Glutamate 5-kinase (375 aa).

Residue lysine 17 participates in ATP binding. Substrate is bound by residues serine 57, aspartate 144, and asparagine 156. Position 176-177 (threonine 176–aspartate 177) interacts with ATP. One can recognise a PUA domain in the interval lysine 283–valine 361.

It belongs to the glutamate 5-kinase family.

Its subcellular location is the cytoplasm. It catalyses the reaction L-glutamate + ATP = L-glutamyl 5-phosphate + ADP. Its pathway is amino-acid biosynthesis; L-proline biosynthesis; L-glutamate 5-semialdehyde from L-glutamate: step 1/2. In terms of biological role, catalyzes the transfer of a phosphate group to glutamate to form L-glutamate 5-phosphate. The sequence is that of Glutamate 5-kinase from Thioalkalivibrio sulfidiphilus (strain HL-EbGR7).